The chain runs to 84 residues: Large ribosomal subunit protein bL31 (84 aa).

The Zn(2+) site is built by C16, C18, C38, and C41.

Belongs to the bacterial ribosomal protein bL31 family. Type A subfamily. As to quaternary structure, part of the 50S ribosomal subunit. Zn(2+) serves as cofactor.

Binds the 23S rRNA. This Mycobacterium leprae (strain Br4923) protein is Large ribosomal subunit protein bL31.